The sequence spans 163 residues: NADH-quinone oxidoreductase subunit I (163 aa).

4Fe-4S ferredoxin-type domains are found at residues 53-83 and 94-123; these read LRRY…IEAG and VRYD…EGPN. [4Fe-4S] cluster contacts are provided by Cys63, Cys66, Cys69, Cys73, Cys103, Cys106, Cys109, and Cys113.

This sequence belongs to the complex I 23 kDa subunit family. NDH-1 is composed of 14 different subunits. Subunits NuoA, H, J, K, L, M, N constitute the membrane sector of the complex. The cofactor is [4Fe-4S] cluster.

Its subcellular location is the cell inner membrane. It catalyses the reaction a quinone + NADH + 5 H(+)(in) = a quinol + NAD(+) + 4 H(+)(out). Functionally, NDH-1 shuttles electrons from NADH, via FMN and iron-sulfur (Fe-S) centers, to quinones in the respiratory chain. The immediate electron acceptor for the enzyme in this species is believed to be ubiquinone. Couples the redox reaction to proton translocation (for every two electrons transferred, four hydrogen ions are translocated across the cytoplasmic membrane), and thus conserves the redox energy in a proton gradient. This chain is NADH-quinone oxidoreductase subunit I, found in Allorhizobium ampelinum (strain ATCC BAA-846 / DSM 112012 / S4) (Agrobacterium vitis (strain S4)).